Reading from the N-terminus, the 249-residue chain is Orotidine 5'-phosphate decarboxylase (249 aa).

Residues aspartate 18, lysine 40, 67–76 (DLKYHDIPNT), threonine 127, arginine 188, glutamine 197, glycine 217, and arginine 218 contribute to the substrate site. Lysine 69 acts as the Proton donor in catalysis.

This sequence belongs to the OMP decarboxylase family. Type 1 subfamily. As to quaternary structure, homodimer.

The catalysed reaction is orotidine 5'-phosphate + H(+) = UMP + CO2. It participates in pyrimidine metabolism; UMP biosynthesis via de novo pathway; UMP from orotate: step 2/2. Functionally, catalyzes the decarboxylation of orotidine 5'-monophosphate (OMP) to uridine 5'-monophosphate (UMP). The sequence is that of Orotidine 5'-phosphate decarboxylase from Baumannia cicadellinicola subsp. Homalodisca coagulata.